Consider the following 365-residue polypeptide: uncharacterized protein (365 aa).

6 helical membrane passes run 3-23 (MDTSKVILIVAIIIWIILYSI), 60-80 (IGIISIPICVILGFFMLLNII), 100-120 (VFLFGDVIPWIPGIIALLIAI), 141-161 (SGILLLLGLPLGAFVELGDEF), 171-191 (AIASAGPLANLIIFLTSIPLL), and 280-300 (TALFINTIYWTYWFNFLLALF).

It to S.solfataricus C04034.

The protein localises to the cell membrane. This is an uncharacterized protein from Methanocaldococcus jannaschii (strain ATCC 43067 / DSM 2661 / JAL-1 / JCM 10045 / NBRC 100440) (Methanococcus jannaschii).